The primary structure comprises 386 residues: Succinate--CoA ligase [ADP-forming] subunit beta (386 aa).

Lysine 46, glutamate 99, alanine 102, and glutamate 107 together coordinate ATP. Residues asparagine 199 and aspartate 213 each contribute to the Mg(2+) site. Residues asparagine 264 and 321–323 (GIM) contribute to the substrate site.

The protein belongs to the succinate/malate CoA ligase beta subunit family. In terms of assembly, heterotetramer of two alpha and two beta subunits. It depends on Mg(2+) as a cofactor.

The enzyme catalyses succinate + ATP + CoA = succinyl-CoA + ADP + phosphate. The catalysed reaction is GTP + succinate + CoA = succinyl-CoA + GDP + phosphate. It participates in carbohydrate metabolism; tricarboxylic acid cycle; succinate from succinyl-CoA (ligase route): step 1/1. Its function is as follows. Succinyl-CoA synthetase functions in the citric acid cycle (TCA), coupling the hydrolysis of succinyl-CoA to the synthesis of either ATP or GTP and thus represents the only step of substrate-level phosphorylation in the TCA. The beta subunit provides nucleotide specificity of the enzyme and binds the substrate succinate, while the binding sites for coenzyme A and phosphate are found in the alpha subunit. This chain is Succinate--CoA ligase [ADP-forming] subunit beta, found in Orientia tsutsugamushi (strain Boryong) (Rickettsia tsutsugamushi).